A 313-amino-acid chain; its full sequence is Putative glycosyltransferase ORF313 (313 aa).

It belongs to the glycosyltransferase group 1 family. Glycosyltransferase 4 subfamily.

The protein is Putative glycosyltransferase ORF313 of Acidianus hospitalis (AFV-1).